We begin with the raw amino-acid sequence, 276 residues long: 4-hydroxy-tetrahydrodipicolinate reductase (276 aa).

16-21 contacts NAD(+); the sequence is GALGKM. Lys-44 lines the NADP(+) pocket. Residues 109–111 and 135–138 contribute to the NAD(+) site; these read GTT and APNF. The active-site Proton donor/acceptor is His-165. His-166 contributes to the (S)-2,3,4,5-tetrahydrodipicolinate binding site. The active-site Proton donor is the Lys-169. 175–176 provides a ligand contact to (S)-2,3,4,5-tetrahydrodipicolinate; sequence GT.

Belongs to the DapB family.

Its subcellular location is the cytoplasm. The catalysed reaction is (S)-2,3,4,5-tetrahydrodipicolinate + NAD(+) + H2O = (2S,4S)-4-hydroxy-2,3,4,5-tetrahydrodipicolinate + NADH + H(+). The enzyme catalyses (S)-2,3,4,5-tetrahydrodipicolinate + NADP(+) + H2O = (2S,4S)-4-hydroxy-2,3,4,5-tetrahydrodipicolinate + NADPH + H(+). Its pathway is amino-acid biosynthesis; L-lysine biosynthesis via DAP pathway; (S)-tetrahydrodipicolinate from L-aspartate: step 4/4. Catalyzes the conversion of 4-hydroxy-tetrahydrodipicolinate (HTPA) to tetrahydrodipicolinate. The chain is 4-hydroxy-tetrahydrodipicolinate reductase from Thermosynechococcus vestitus (strain NIES-2133 / IAM M-273 / BP-1).